Here is a 484-residue protein sequence, read N- to C-terminus: Cathepsin F (484 aa).

Residues 1 to 19 form the signal peptide; that stretch reads MAPWLQLLSLLGLLPGAVA. Residues 20-270 constitute a propeptide, activation peptide; sequence APAQPRAASF…MKQAKSVGDL (251 aa). N-linked (GlcNAc...) asparagine glycans are attached at residues Asn-160 and Asn-195. Cystine bridges form between Cys-292/Cys-333 and Cys-326/Cys-366. The active site involves Cys-295. N-linked (GlcNAc...) asparagine glycans are attached at residues Asn-367 and Asn-378. Cys-424 and Cys-472 are joined by a disulfide. Residue His-431 is part of the active site. The N-linked (GlcNAc...) asparagine glycan is linked to Asn-440. The active site involves Asn-451.

Belongs to the peptidase C1 family. In terms of tissue distribution, high expression levels in heart, skeletal muscle, brain, testis and ovary; moderate levels in prostate, placenta, liver and colon; and no detectable expression in peripheral leukocytes and thymus.

It is found in the lysosome. It carries out the reaction The recombinant enzyme cleaves synthetic substrates with Phe and Leu (better than Val) in P2, with high specificity constant (kcat/Km) comparable to that of cathepsin L.. In terms of biological role, thiol protease which is believed to participate in intracellular degradation and turnover of proteins. Has also been implicated in tumor invasion and metastasis. This Homo sapiens (Human) protein is Cathepsin F (CTSF).